Consider the following 155-residue polypeptide: Small ribosomal subunit protein uS7 (155 aa).

Belongs to the universal ribosomal protein uS7 family. As to quaternary structure, part of the 30S ribosomal subunit. Contacts proteins S9 and S11.

In terms of biological role, one of the primary rRNA binding proteins, it binds directly to 16S rRNA where it nucleates assembly of the head domain of the 30S subunit. Is located at the subunit interface close to the decoding center, probably blocks exit of the E-site tRNA. This chain is Small ribosomal subunit protein uS7, found in Desulforapulum autotrophicum (strain ATCC 43914 / DSM 3382 / VKM B-1955 / HRM2) (Desulfobacterium autotrophicum).